The following is a 256-amino-acid chain: Protein FixA (256 aa).

The protein belongs to the ETF beta-subunit/FixA family. As to quaternary structure, heterodimer of FixA and FixB.

The protein operates within amine and polyamine metabolism; carnitine metabolism. Its function is as follows. Required for anaerobic carnitine reduction. May bring reductant to CaiA. The protein is Protein FixA of Escherichia coli O139:H28 (strain E24377A / ETEC).